A 614-amino-acid chain; its full sequence is tRNA uridine 5-carboxymethylaminomethyl modification enzyme MnmG (614 aa).

10 to 15 is an FAD binding site; that stretch reads GAGHAG. NAD(+) is bound at residue 271–285; it reads GPRYCPSIEDKIVKF.

The protein belongs to the MnmG family. Homodimer. Heterotetramer of two MnmE and two MnmG subunits. FAD serves as cofactor.

The protein resides in the cytoplasm. In terms of biological role, NAD-binding protein involved in the addition of a carboxymethylaminomethyl (cmnm) group at the wobble position (U34) of certain tRNAs, forming tRNA-cmnm(5)s(2)U34. The polypeptide is tRNA uridine 5-carboxymethylaminomethyl modification enzyme MnmG (Ureaplasma urealyticum serovar 10 (strain ATCC 33699 / Western)).